Here is a 430-residue protein sequence, read N- to C-terminus: Trigger factor (430 aa).

The region spanning 157–242 is the PPIase FKBP-type domain; sequence GDLVALETWS…AVEVSEPVLP (86 aa).

It belongs to the FKBP-type PPIase family. Tig subfamily.

It is found in the cytoplasm. The catalysed reaction is [protein]-peptidylproline (omega=180) = [protein]-peptidylproline (omega=0). Functionally, involved in protein export. Acts as a chaperone by maintaining the newly synthesized protein in an open conformation. Functions as a peptidyl-prolyl cis-trans isomerase. This is Trigger factor from Xanthomonas axonopodis pv. citri (strain 306).